The following is a 423-amino-acid chain: Torsin-4A (423 aa).

Residues 47-68 form a disordered region; it reads PGGGPDVGTGAPRPGCSPRAPR. Phosphoserine is present on residues S63 and S81. T89 is modified (phosphothreonine). At S106 the chain carries Phosphoserine. The helical transmembrane segment at 122–138 threads the bilayer; the sequence is CLLLLVAIVGFQVLNAI. 194–201 is a binding site for ATP; that stretch reads GPSGVGKS.

The protein belongs to the ClpA/ClpB family. Torsin subfamily.

The protein resides in the membrane. In Homo sapiens (Human), this protein is Torsin-4A (TOR4A).